Reading from the N-terminus, the 404-residue chain is S-adenosylmethionine synthase (404 aa).

His17 provides a ligand contact to ATP. Asp19 contributes to the Mg(2+) binding site. Position 45 (Glu45) interacts with K(+). Positions 58 and 101 each coordinate L-methionine. Residues 101–111 (QSPDINRGVDR) are flexible loop. ATP-binding positions include 172–174 (DAK), 245–246 (RF), Asp254, 260–261 (RK), Ala277, and Lys281. Residue Asp254 participates in L-methionine binding. L-methionine is bound at residue Lys285.

The protein belongs to the AdoMet synthase family. Homotetramer; dimer of dimers. It depends on Mg(2+) as a cofactor. Requires K(+) as cofactor.

The protein localises to the cytoplasm. It carries out the reaction L-methionine + ATP + H2O = S-adenosyl-L-methionine + phosphate + diphosphate. It functions in the pathway amino-acid biosynthesis; S-adenosyl-L-methionine biosynthesis; S-adenosyl-L-methionine from L-methionine: step 1/1. Functionally, catalyzes the formation of S-adenosylmethionine (AdoMet) from methionine and ATP. The overall synthetic reaction is composed of two sequential steps, AdoMet formation and the subsequent tripolyphosphate hydrolysis which occurs prior to release of AdoMet from the enzyme. The protein is S-adenosylmethionine synthase of Pelodictyon phaeoclathratiforme (strain DSM 5477 / BU-1).